The following is a 126-amino-acid chain: Large ribosomal subunit protein bL12 (126 aa).

The protein belongs to the bacterial ribosomal protein bL12 family. Homodimer. Part of the ribosomal stalk of the 50S ribosomal subunit. Forms a multimeric L10(L12)X complex, where L10 forms an elongated spine to which 2 to 4 L12 dimers bind in a sequential fashion. Binds GTP-bound translation factors.

Its function is as follows. Forms part of the ribosomal stalk which helps the ribosome interact with GTP-bound translation factors. Is thus essential for accurate translation. The protein is Large ribosomal subunit protein bL12 of Coxiella burnetii (strain CbuK_Q154) (Coxiella burnetii (strain Q154)).